Consider the following 160-residue polypeptide: Major pollen allergen Bet v 1-A (160 aa).

Residues lysine 55, tyrosine 82, tyrosine 84, and asparagine 101 each coordinate brassinolide.

This sequence belongs to the BetVI family.

The protein resides in the cytoplasm. In terms of biological role, may be a general steroid carrier protein. This Betula pendula (European white birch) protein is Major pollen allergen Bet v 1-A (BETVIA).